The following is a 338-amino-acid chain: UDP-3-O-acylglucosamine N-acyltransferase (338 aa).

Residue His-239 is the Proton acceptor of the active site.

The protein belongs to the transferase hexapeptide repeat family. LpxD subfamily. In terms of assembly, homotrimer.

It carries out the reaction a UDP-3-O-[(3R)-3-hydroxyacyl]-alpha-D-glucosamine + a (3R)-hydroxyacyl-[ACP] = a UDP-2-N,3-O-bis[(3R)-3-hydroxyacyl]-alpha-D-glucosamine + holo-[ACP] + H(+). Its pathway is bacterial outer membrane biogenesis; LPS lipid A biosynthesis. Its function is as follows. Catalyzes the N-acylation of UDP-3-O-acylglucosamine using 3-hydroxyacyl-ACP as the acyl donor. Is involved in the biosynthesis of lipid A, a phosphorylated glycolipid that anchors the lipopolysaccharide to the outer membrane of the cell. This Thermosynechococcus vestitus (strain NIES-2133 / IAM M-273 / BP-1) protein is UDP-3-O-acylglucosamine N-acyltransferase.